The sequence spans 31 residues: Cuticle protein 54 (31 aa).

Tandem repeats lie at residues A7–A10 and A13–I17.

Component of the cuticle of migratory locust which contains more than 100 different structural proteins. This is Cuticle protein 54 from Locusta migratoria (Migratory locust).